The chain runs to 721 residues: Long-chain-fatty-acid--CoA ligase ACSBG1 (721 aa).

The interval 1–64 (MPRGSEAGYC…SHGLELSAPE (64 aa)) is disordered. A compositionally biased stretch (polar residues) spans 26-52 (QQGASLGTSQDNSQTSSLIDGQTLSKE). Ser-34, Ser-50, Ser-53, and Ser-70 each carry phosphoserine. Residues 279-287 (TSGTTGNPK), 469-474 (AGYGLS), Asp-547, and Arg-562 each bind ATP. Tyr-655 carries the post-translational modification Phosphotyrosine. Lys-698 is a binding site for ATP.

This sequence belongs to the ATP-dependent AMP-binding enzyme family. Bubblegum subfamily. As to expression, mainly expressed in brain. Also expressed in adrenal gland and testis. In brain, it is present in cerebral cortical and cerebellar neurons and in steroidogenic cells of the adrenal gland, testis and ovary (at protein level).

It is found in the cytoplasm. The protein localises to the cytoplasmic vesicle. It localises to the microsome. Its subcellular location is the endoplasmic reticulum. The protein resides in the cell membrane. It carries out the reaction a long-chain fatty acid + ATP + CoA = a long-chain fatty acyl-CoA + AMP + diphosphate. The catalysed reaction is (E)-hexadec-2-enoate + ATP + CoA = (2E)-hexadecenoyl-CoA + AMP + diphosphate. The enzyme catalyses hexadecanoate + ATP + CoA = hexadecanoyl-CoA + AMP + diphosphate. Catalyzes the conversion of fatty acids such as long-chain and very long-chain fatty acids to their active form acyl-CoAs for both synthesis of cellular lipids, and degradation via beta-oxidation. Can activate diverse saturated, monosaturated and polyunsaturated fatty acids. The chain is Long-chain-fatty-acid--CoA ligase ACSBG1 from Mus musculus (Mouse).